The sequence spans 488 residues: Glutamyl-tRNA(Gln) amidotransferase subunit A (488 aa).

Residues K77 and S152 each act as charge relay system in the active site. S176 functions as the Acyl-ester intermediate in the catalytic mechanism.

It belongs to the amidase family. GatA subfamily. As to quaternary structure, heterotrimer of A, B and C subunits.

It carries out the reaction L-glutamyl-tRNA(Gln) + L-glutamine + ATP + H2O = L-glutaminyl-tRNA(Gln) + L-glutamate + ADP + phosphate + H(+). Its function is as follows. Allows the formation of correctly charged Gln-tRNA(Gln) through the transamidation of misacylated Glu-tRNA(Gln) in organisms which lack glutaminyl-tRNA synthetase. The reaction takes place in the presence of glutamine and ATP through an activated gamma-phospho-Glu-tRNA(Gln). The sequence is that of Glutamyl-tRNA(Gln) amidotransferase subunit A from Streptococcus equi subsp. zooepidemicus (strain H70).